The primary structure comprises 163 residues: S-ribosylhomocysteine lyase (163 aa).

Positions 54, 58, and 128 each coordinate Fe cation.

This sequence belongs to the LuxS family. In terms of assembly, homodimer. Requires Fe cation as cofactor.

It carries out the reaction S-(5-deoxy-D-ribos-5-yl)-L-homocysteine = (S)-4,5-dihydroxypentane-2,3-dione + L-homocysteine. Involved in the synthesis of autoinducer 2 (AI-2) which is secreted by bacteria and is used to communicate both the cell density and the metabolic potential of the environment. The regulation of gene expression in response to changes in cell density is called quorum sensing. Catalyzes the transformation of S-ribosylhomocysteine (RHC) to homocysteine (HC) and 4,5-dihydroxy-2,3-pentadione (DPD). The protein is S-ribosylhomocysteine lyase of Wolinella succinogenes (strain ATCC 29543 / DSM 1740 / CCUG 13145 / JCM 31913 / LMG 7466 / NCTC 11488 / FDC 602W) (Vibrio succinogenes).